We begin with the raw amino-acid sequence, 318 residues long: Malonyl CoA-acyl carrier protein transacylase, mitochondrial (318 aa).

This sequence belongs to the FabD family.

The protein resides in the mitochondrion. It carries out the reaction holo-[ACP] + malonyl-CoA = malonyl-[ACP] + CoA. Its pathway is lipid metabolism; fatty acid biosynthesis. Involved in biosynthesis of fatty acids in mitochondria. The sequence is that of Malonyl CoA-acyl carrier protein transacylase, mitochondrial (mct1) from Schizosaccharomyces pombe (strain 972 / ATCC 24843) (Fission yeast).